A 232-amino-acid chain; its full sequence is Putative N-acetylmannosamine-6-phosphate 2-epimerase (232 aa).

The protein belongs to the NanE family.

It catalyses the reaction an N-acyl-D-glucosamine 6-phosphate = an N-acyl-D-mannosamine 6-phosphate. It functions in the pathway amino-sugar metabolism; N-acetylneuraminate degradation; D-fructose 6-phosphate from N-acetylneuraminate: step 3/5. In terms of biological role, converts N-acetylmannosamine-6-phosphate (ManNAc-6-P) to N-acetylglucosamine-6-phosphate (GlcNAc-6-P). The chain is Putative N-acetylmannosamine-6-phosphate 2-epimerase from Borrelia garinii subsp. bavariensis (strain ATCC BAA-2496 / DSM 23469 / PBi) (Borreliella bavariensis).